A 286-amino-acid chain; its full sequence is 4-diphosphocytidyl-2-C-methyl-D-erythritol kinase (286 aa).

Lysine 12 is an active-site residue. Position 96–106 (96–106 (PHGAGLGGGSA)) interacts with ATP. Residue aspartate 138 is part of the active site.

Belongs to the GHMP kinase family. IspE subfamily.

It carries out the reaction 4-CDP-2-C-methyl-D-erythritol + ATP = 4-CDP-2-C-methyl-D-erythritol 2-phosphate + ADP + H(+). Its pathway is isoprenoid biosynthesis; isopentenyl diphosphate biosynthesis via DXP pathway; isopentenyl diphosphate from 1-deoxy-D-xylulose 5-phosphate: step 3/6. Its function is as follows. Catalyzes the phosphorylation of the position 2 hydroxy group of 4-diphosphocytidyl-2C-methyl-D-erythritol. This Nitratidesulfovibrio vulgaris (strain DP4) (Desulfovibrio vulgaris) protein is 4-diphosphocytidyl-2-C-methyl-D-erythritol kinase.